The following is a 132-amino-acid chain: MFAYRALVGWAPQSLIYFTTLLVDDKSLLCLVDGIQVFVYWAWPSQTMQSFSRTQFDSVGRSSLCARNAMLAFKLFEVHRRGYKPDTALCNWGGGGSRTLAATSISGSNQIRITMLWSGPGIGAWPKYKTRC.

This is an uncharacterized protein from Gallus gallus (Chicken).